Consider the following 182-residue polypeptide: Prorelaxin (182 aa).

The first 24 residues, 1 to 24, serve as a signal peptide directing secretion; sequence MPRLFSYLLGVWLLLSQLPREIPG. Glutamine 25 bears the Pyrrolidone carboxylic acid mark. 3 disulfide bridges follow: cysteine 34–cysteine 169, cysteine 46–cysteine 182, and cysteine 168–cysteine 173. Residues 57–154 constitute a propeptide, connecting peptide; it reads SLEEPQLETG…LKNLGLDKHS (98 aa). Residues 159–160 constitute a propeptide that is removed on maturation; it reads LF.

Belongs to the insulin family. Heterodimer of a B chain and an A chain linked by two disulfide bonds.

It localises to the secreted. Relaxin is an ovarian hormone that acts with estrogen to produce dilatation of the birth canal in many mammals. In Sus scrofa (Pig), this protein is Prorelaxin (RLN).